Here is a 171-residue protein sequence, read N- to C-terminus: Small ribosomal subunit protein uS5 (171 aa).

Residues leucine 12–valine 75 form the S5 DRBM domain.

It belongs to the universal ribosomal protein uS5 family. In terms of assembly, part of the 30S ribosomal subunit. Contacts proteins S4 and S8.

In terms of biological role, with S4 and S12 plays an important role in translational accuracy. Its function is as follows. Located at the back of the 30S subunit body where it stabilizes the conformation of the head with respect to the body. This is Small ribosomal subunit protein uS5 from Buchnera aphidicola subsp. Baizongia pistaciae (strain Bp).